Here is a 179-residue protein sequence, read N- to C-terminus: Ribosome-recycling factor (179 aa).

Belongs to the RRF family.

Its subcellular location is the cytoplasm. In terms of biological role, responsible for the release of ribosomes from messenger RNA at the termination of protein biosynthesis. May increase the efficiency of translation by recycling ribosomes from one round of translation to another. This Chlamydia trachomatis serovar L2b (strain UCH-1/proctitis) protein is Ribosome-recycling factor.